Reading from the N-terminus, the 340-residue chain is 3-isopropylmalate dehydrogenase (340 aa).

Substrate is bound by residues Arg88, Arg98, Arg122, and Asp212. The Mg(2+) site is built by Asp212, Asp236, and Asp240. 272–284 (GSAPDIAGQGIAD) lines the NAD(+) pocket.

Belongs to the isocitrate and isopropylmalate dehydrogenases family. LeuB type 2 subfamily. As to quaternary structure, homodimer. It depends on Mg(2+) as a cofactor. Mn(2+) serves as cofactor.

The protein resides in the cytoplasm. It carries out the reaction (2R,3S)-3-isopropylmalate + NAD(+) = 4-methyl-2-oxopentanoate + CO2 + NADH. Its pathway is amino-acid biosynthesis; L-leucine biosynthesis; L-leucine from 3-methyl-2-oxobutanoate: step 3/4. Its function is as follows. Catalyzes the oxidation of 3-carboxy-2-hydroxy-4-methylpentanoate (3-isopropylmalate) to 3-carboxy-4-methyl-2-oxopentanoate. The product decarboxylates to 4-methyl-2 oxopentanoate. This Corynebacterium glutamicum (strain R) protein is 3-isopropylmalate dehydrogenase.